Consider the following 166-residue polypeptide: UPF0304 protein VP0990 (166 aa).

This sequence belongs to the UPF0304 family.

The sequence is that of UPF0304 protein VP0990 from Vibrio parahaemolyticus serotype O3:K6 (strain RIMD 2210633).